The primary structure comprises 208 residues: Fibroblast growth factor 6 (208 aa).

Positions 1–37 are cleaved as a signal peptide; that stretch reads MALGQKLFITMSRGAGRLQGTLWALVFLGILVGMVVP. Asparagine 45 carries an N-linked (GlcNAc...) asparagine glycan. Residues cysteine 90 and cysteine 157 are joined by a disulfide bond.

It belongs to the heparin-binding growth factors family. As to quaternary structure, interacts with FGFR1, FGFR2 and FGFR4. Affinity between fibroblast growth factors (FGFs) and their receptors is increased by heparan sulfate glycosaminoglycans that function as coreceptors. Leukemia cell lines with platelet/ megakaryocytic differentiation potential.

The protein resides in the secreted. It localises to the extracellular space. In terms of biological role, plays an important role in the regulation of cell proliferation, cell differentiation, angiogenesis and myogenesis, and is required for normal muscle regeneration. The chain is Fibroblast growth factor 6 (FGF6) from Homo sapiens (Human).